Here is a 347-residue protein sequence, read N- to C-terminus: Glycerol-1-phosphate dehydrogenase [NAD(P)+] (347 aa).

Residues 90-94 (GRPVD) and 112-115 (TAIS) each bind NAD(+). Asp-117 contacts substrate. An NAD(+)-binding site is contributed by Ser-121. Asp-165 contacts substrate. Positions 165 and 245 each coordinate Zn(2+). Residue His-249 coordinates substrate. Residue His-262 coordinates Zn(2+).

The protein belongs to the glycerol-1-phosphate dehydrogenase family. In terms of assembly, homodimer. Requires Zn(2+) as cofactor.

The protein resides in the cytoplasm. The catalysed reaction is sn-glycerol 1-phosphate + NAD(+) = dihydroxyacetone phosphate + NADH + H(+). It carries out the reaction sn-glycerol 1-phosphate + NADP(+) = dihydroxyacetone phosphate + NADPH + H(+). It participates in membrane lipid metabolism; glycerophospholipid metabolism. In terms of biological role, catalyzes the NAD(P)H-dependent reduction of dihydroxyacetonephosphate (DHAP or glycerone phosphate) to glycerol 1-phosphate (G1P). The G1P thus generated is used as the glycerophosphate backbone of phospholipids in the cellular membranes of Archaea. The sequence is that of Glycerol-1-phosphate dehydrogenase [NAD(P)+] from Thermofilum pendens (strain DSM 2475 / Hrk 5).